The following is a 533-amino-acid chain: MARLPAGIRFIISFSRDQWYRAFIFILTFLLYASFHLSRKPISIVKGELHKYCTAWDEADVRFSSQNRKSGSAAPHQLPDNETDCGWAPFDKNNYQQLLGALDYSFLCAYAVGMYLSGIIGERLPIRYYLTFGMLASGAFTALFGLGYFYNIHSFGFYVVTQVINGLVQTTGWPSVVTCLGNWFGKGRRGLIMGVWNSHTSVGNILGSLIAGYWVSTCWGLSFVVPGAIVAAMGIVCFLFLIEHPNDVRCSSTLVTHSKGYENGTNRLRLQKQILKSEKNKPLDPEMQCLLLSDGKGSIHPNHVVILPGDGGSGTAAISFTGALKIPGVIEFSLCLLFAKLVSYTFLFWLPLYITNVDHLDAKKAGELSTLFDVGGIFGGILAGVISDRLEKRASTCGLMLLLAAPTLYIFSTVSKMGLEATIAMLLLSGALVSGPYTLITTAVSADLGTHKSLKGNAHALSTVTAIIDGTGSVGAALGPLLAGLLSPSGWSNVFYMLMFADACALLFLIRLIHKELSCPGSATGDQVPFKEQ.

The helical transmembrane segment at 18–38 threads the bilayer; it reads QWYRAFIFILTFLLYASFHLS. The N-linked (GlcNAc...) asparagine glycan is linked to Asn81. A run of 4 helical transmembrane segments spans residues 100-120, 129-149, 157-177, and 222-242; these read GALD…SGII, YLTF…LGYF, FYVV…PSVV, and SFVV…LFLI. Asn263 carries N-linked (GlcNAc...) asparagine glycosylation. The next 7 membrane-spanning stretches (helical) occupy residues 304-324, 334-354, 366-386, 394-414, 423-443, 466-486, and 490-510; these read VVIL…TGAL, LCLL…PLYI, GELS…AGVI, ASTC…FSTV, IAML…ITTA, AIID…AGLL, and GWSN…LFLI.

Belongs to the major facilitator superfamily. Organophosphate:Pi antiporter (OPA) (TC 2.A.1.4) family. As to expression, expressed in numerous tissues, with highest expression in pancreas, kidney, bone marrow, spleen, liver, small intestine, as well as in fetal brain, liver and spleen.

It localises to the endoplasmic reticulum membrane. It carries out the reaction D-glucose 6-phosphate(in) + phosphate(out) = D-glucose 6-phosphate(out) + phosphate(in). With respect to regulation, inhibited by vanadate but not by chlorogenic acid. In terms of biological role, inorganic phosphate and glucose-6-phosphate antiporter. May transport cytoplasmic glucose-6-phosphate into the lumen of the endoplasmic reticulum and translocate inorganic phosphate into the opposite direction. Independent of a lumenal glucose-6-phosphatase. May not play a role in homeostatic regulation of blood glucose levels. The chain is Glucose-6-phosphate exchanger SLC37A1 from Homo sapiens (Human).